The primary structure comprises 338 residues: tRNA N6-adenosine threonylcarbamoyltransferase (338 aa).

Fe cation-binding residues include histidine 111 and histidine 115. Substrate contacts are provided by residues leucine 134–glycine 138, aspartate 167, glycine 180, and asparagine 272. Aspartate 300 is a binding site for Fe cation.

This sequence belongs to the KAE1 / TsaD family. The cofactor is Fe(2+).

The protein resides in the cytoplasm. The catalysed reaction is L-threonylcarbamoyladenylate + adenosine(37) in tRNA = N(6)-L-threonylcarbamoyladenosine(37) in tRNA + AMP + H(+). Functionally, required for the formation of a threonylcarbamoyl group on adenosine at position 37 (t(6)A37) in tRNAs that read codons beginning with adenine. Is involved in the transfer of the threonylcarbamoyl moiety of threonylcarbamoyl-AMP (TC-AMP) to the N6 group of A37, together with TsaE and TsaB. TsaD likely plays a direct catalytic role in this reaction. The sequence is that of tRNA N6-adenosine threonylcarbamoyltransferase from Shewanella putrefaciens (strain CN-32 / ATCC BAA-453).